Consider the following 346-residue polypeptide: Methionine import ATP-binding protein MetN 1 (346 aa).

The region spanning 2 to 241 (IELKNVSKVF…PQHVTTKKFV (240 aa)) is the ABC transporter domain. ATP is bound at residue 38 to 45 (GYSGAGKS).

Belongs to the ABC transporter superfamily. Methionine importer (TC 3.A.1.24) family. In terms of assembly, the complex is composed of two ATP-binding proteins (MetN), two transmembrane proteins (MetI) and a solute-binding protein (MetQ).

Its subcellular location is the cell membrane. It carries out the reaction L-methionine(out) + ATP + H2O = L-methionine(in) + ADP + phosphate + H(+). It catalyses the reaction D-methionine(out) + ATP + H2O = D-methionine(in) + ADP + phosphate + H(+). Part of the ABC transporter complex MetNIQ involved in methionine import. Responsible for energy coupling to the transport system. The polypeptide is Methionine import ATP-binding protein MetN 1 (Bacillus cereus (strain ZK / E33L)).